The primary structure comprises 131 residues: Antitoxin MqsA (131 aa).

Residues Cys-3, Cys-6, Cys-37, and Cys-40 each coordinate Zn(2+). In terms of domain architecture, HTH cro/C1-type spans 74-127 (IVKVRKKLSLTQKEASEIFGGGVNAFSRYEKGNAQPHPSTIKLLRVLDKHPELL). The H-T-H motif DNA-binding region spans 85-104 (QKEASEIFGGGVNAFSRYEK).

As to quaternary structure, homodimer. Crystallizes as a heterotetramer with MqsA, MqsR-MqsA(2)-MqsR. Purifies as a probable heterohexamer of 2 MqsR dimers and 1 MqsA dimer. Binds promoter DNA as a dimer. When the 2 dissociate the MsqR mRNA interferase becomes active. Requires Zn(2+) as cofactor. Post-translationally, degraded in the presence of oxidative stress, maybe by the Lon and/or ClpX proteases.

Antitoxin component of a type II toxin-antitoxin (TA) system. Labile antitoxin that binds to the MqsR mRNA interferase toxin and neutralizes its endoribonuclease activity. Overexpression prevents MqsR-mediated cessation of cell growth and inhibition of cell proliferation. Initially reported to act as a cotranscription factor with MqsA. Following further experiments, the MqsR-MqsA complex does not bind DNA and all reported data are actually due to a small fraction of free MqsA alone binding DNA. Addition of MqsR to a preformed MqsA-promoter DNA complex causes dissociation of the MqsA-DNA complex, probably causing derepression of MqsA-repressed transcripts. MqsA binds to 2 palindromes in the promoter region of the mqsRA operon activating its transcription. Binds to other promoters, inducing mcbR and spy and repressing cspD among others. Binds to and represses the rpoS promoter, the master stress regulator, resulting in decreased cyclic-di-GMP, reduced stress resistance, increased cell motility and decreased biofilm formation; in these experiments 5 TA systems are missing (lacks MazEF, RelEB, ChpB, YoeB-YefM, YafQ-DinJ). An earlier study showed overexpression alone increases biofilm formation, perhaps by repressing cspD; in these experiments the 5 TA systems are present. Represses the csgD promoter. In the presence of stress, when this protein is degraded, the promoters it represses are derepressed, leading to biofilm formation. This TA system mediates cell growth during bile acid deoxycholate stress by degrading mRNA for probable deoxycholate-binding protein YgiS; bile acid detergents such as deoxycholate are important for host defense against bacterial growth in the gall bladder and duodenum. This is Antitoxin MqsA from Escherichia coli (strain K12).